The sequence spans 607 residues: Phosphoenolpyruvate carboxykinase [GTP] (607 aa).

Substrate is bound by residues Arg81 and 221-223 (YGG). Mn(2+)-binding residues include Lys230 and His250. Ser272 serves as a coordination point for substrate. Residue 273 to 278 (ACGKTN) coordinates GTP. Cys274 is a catalytic residue. Residue Asp297 coordinates Mn(2+). A substrate-binding site is contributed by 388 to 390 (NSR). GTP is bound by residues Arg390, Arg421, and 516-519 (FGDN).

This sequence belongs to the phosphoenolpyruvate carboxykinase [GTP] family. Monomer. It depends on Mn(2+) as a cofactor.

The protein resides in the cytoplasm. The catalysed reaction is oxaloacetate + GTP = phosphoenolpyruvate + GDP + CO2. Its pathway is carbohydrate biosynthesis; gluconeogenesis. Catalyzes the conversion of oxaloacetate (OAA) to phosphoenolpyruvate (PEP), the rate-limiting step in the metabolic pathway that produces glucose from lactate and other precursors derived from the citric acid cycle. The polypeptide is Phosphoenolpyruvate carboxykinase [GTP] (Renibacterium salmoninarum (strain ATCC 33209 / DSM 20767 / JCM 11484 / NBRC 15589 / NCIMB 2235)).